The chain runs to 56 residues: uncharacterized protein (56 aa).

A helical membrane pass occupies residues 30–52 (IKIGIICVIITWAIFSINHHHTI).

The protein resides in the membrane. This is an uncharacterized protein from Dictyostelium discoideum (Social amoeba).